Reading from the N-terminus, the 23-residue chain is Caerulein precursor fragment BM2 (23 aa).

Expressed by the skin glands.

The protein localises to the secreted. Functionally, antimicrobial peptide. The protein is Caerulein precursor fragment BM2 of Xenopus boumbaensis (Mawa clawed frog).